The following is a 391-amino-acid chain: MTELYFCFHESIQKELSKFIVNENKNRDKNQTSKLMIDDNKIINFSTIDGVFNWGNIVIEFNDAIEYIGFLIKSNIHCRMKFHNGKTIGPDADCKCSKNYEDYLLVSVTNGKKKHILFFFRKLLPYLRTHDENINVKLGVSISLLFSKQISTNAIKYMFKISHLKDFCFLFNGLLQYRLISKKLIEYIMDSYQKKLTKHFVEDKIDDKDVAFLDFRKILANTIDNQKSTKLLQYVIDEFSNIANNIDRNDVKKKYRKSYDSLTENYVYDKKIINSLMEHCIYSESSSKFFNILTLDMGDYKNFTPDLVDIIMTHSTMKYTRIFFKNVLVSYPDEINKLFLNSLKYDCDVVDLLVEYGADYNKYGQQLLLEAKRRCKVLLANYLENLMDVTN.

The protein belongs to the mimivirus L17x/L18x family.

This is an uncharacterized protein from Acanthamoeba polyphaga (Amoeba).